We begin with the raw amino-acid sequence, 277 residues long: Shikimate dehydrogenase (NADP(+)) (277 aa).

Shikimate contacts are provided by residues 15–17 and threonine 62; that span reads SLS. Catalysis depends on lysine 66, which acts as the Proton acceptor. Asparagine 87 and aspartate 102 together coordinate shikimate. Residues 127–131, 151–156, and isoleucine 219 contribute to the NADP(+) site; these read GAGGA and NRTRDK. Tyrosine 221 serves as a coordination point for shikimate. Glycine 242 provides a ligand contact to NADP(+).

The protein belongs to the shikimate dehydrogenase family. As to quaternary structure, homodimer.

It catalyses the reaction shikimate + NADP(+) = 3-dehydroshikimate + NADPH + H(+). It functions in the pathway metabolic intermediate biosynthesis; chorismate biosynthesis; chorismate from D-erythrose 4-phosphate and phosphoenolpyruvate: step 4/7. Its function is as follows. Involved in the biosynthesis of the chorismate, which leads to the biosynthesis of aromatic amino acids. Catalyzes the reversible NADPH linked reduction of 3-dehydroshikimate (DHSA) to yield shikimate (SA). The protein is Shikimate dehydrogenase (NADP(+)) of Bacillus mycoides (strain KBAB4) (Bacillus weihenstephanensis).